A 205-amino-acid chain; its full sequence is DNA-directed RNA polymerase RPB5 homolog (205 aa).

This sequence belongs to the archaeal RpoH/eukaryotic RPB5 RNA polymerase subunit family. Part of the viral DNA-directed RNA polymerase that consists of 8 polII-like subunits (RPB1, RPB2, RPB3, RPB5, RPB6, RPB7, RPB9, RPB10), a capping enzyme and a termination factor.

The protein localises to the host cytoplasm. The protein resides in the virion. In terms of biological role, component of the DNA-directed RNA polymerase (RNAP) that catalyzes the transcription in the cytoplasm of viral DNA into RNA using the four ribonucleoside triphosphates as substrates. This African swine fever virus (isolate Pig/Kenya/KEN-50/1950) (ASFV) protein is DNA-directed RNA polymerase RPB5 homolog.